Consider the following 54-residue polypeptide: Hemoglobin subunit omega (54 aa).

The Globin domain maps to 2–54; sequence HWTAEEKQIILAIWAKIDIEEAGAAALSRLLVVYPWTQRYFKNFGNLSSPTAI.

The protein belongs to the globin family.

Its function is as follows. Hemoglobin omega chain is an embryonic-type beta-type chain found in prenatal and neonatal marsupials. The sequence is that of Hemoglobin subunit omega from Notamacropus eugenii (Tammar wallaby).